We begin with the raw amino-acid sequence, 288 residues long: Homeobox protein Hox-B4a (288 aa).

The segment at 10–136 (SNYVDPKFPP…ASSPASTRKD (127 aa)) is disordered. Over residues 118 to 132 (CGQTPHSQGASSPAS) the composition is skewed to polar residues. The Antp-type hexapeptide signature appears at 139–144 (VYPWMK). Residues 160–219 (PKRSRTAYTRQQVLELEKEFHYNRYLTRRRRVEIAHTLCLSERQIKIWFQNRRMKWKKDH) constitute a DNA-binding region (homeobox).

It belongs to the Antp homeobox family. Deformed subfamily.

Its subcellular location is the nucleus. Its function is as follows. Sequence-specific transcription factor which is part of a developmental regulatory system that provides cells with specific positional identities on the anterior-posterior axis. The protein is Homeobox protein Hox-B4a (hoxb4a) of Takifugu rubripes (Japanese pufferfish).